The sequence spans 436 residues: Type II methyltransferase M.BsuRI (436 aa).

Residues 59 to 409 (INVLSLFSGC…SPIANWAINY (351 aa)) form the SAM-dependent MTase C5-type domain. The active site involves Cys-157.

Belongs to the class I-like SAM-binding methyltransferase superfamily. C5-methyltransferase family. Monomer.

The enzyme catalyses a 2'-deoxycytidine in DNA + S-adenosyl-L-methionine = a 5-methyl-2'-deoxycytidine in DNA + S-adenosyl-L-homocysteine + H(+). In terms of biological role, a methylase, recognizes the double-stranded sequence 5'-GGCC-3', methylates C-3 on both strands, and protects the DNA from cleavage by the BsuRI endonuclease. This Bacillus subtilis protein is Type II methyltransferase M.BsuRI (hsdRM).